Consider the following 772-residue polypeptide: Ion-translocating oxidoreductase complex subunit C (772 aa).

2 consecutive 4Fe-4S ferredoxin-type domains span residues 369–397 and 407–436; these read GEPQ…QQLY and KATT…VQYF. [4Fe-4S] cluster contacts are provided by cysteine 377, cysteine 380, cysteine 383, cysteine 387, cysteine 416, cysteine 419, cysteine 422, and cysteine 426. Disordered stretches follow at residues 602 to 684, 696 to 717, and 727 to 746; these read KLEQ…DPRK, ARKL…PRKA, and KARK…QVDP. Residues 605–615 show a composition bias toward low complexity; the sequence is QQQANAEPEQQ.

It belongs to the 4Fe4S bacterial-type ferredoxin family. RnfC subfamily. As to quaternary structure, the complex is composed of six subunits: RsxA, RsxB, RsxC, RsxD, RsxE and RsxG. It depends on [4Fe-4S] cluster as a cofactor.

The protein localises to the cell inner membrane. In terms of biological role, part of a membrane-bound complex that couples electron transfer with translocation of ions across the membrane. Required to maintain the reduced state of SoxR. The polypeptide is Ion-translocating oxidoreductase complex subunit C (Escherichia coli O157:H7 (strain EC4115 / EHEC)).